The sequence spans 178 residues: uncharacterized protein (178 aa).

This protein is non-essential for virus function. This is an uncharacterized protein from Sulfolobus spindle-shape virus 1 (SSV1).